The chain runs to 315 residues: MPDMKLFAGNATPELAQRIANRLYTSLGDAAVGRFSDGEVSVQINENVRGGDIFIIQSTCAPTNDNLMELVVMVDALRRASAGRITAVIPYFGYARQDRRVRSARVPITAKVVADFLSSVGVDRVLTVDLHAEQIQGFFDVPVDNVFGSPILLEDMLQQNLENPIVVSPDIGGVVRARAIAKLLNDTDMAIIDKRRPRANVSQVMHIIGDVAGRDCVLVDDMIDTGGTLCKAAEALKERGAKRVFAYATHPIFSGNAVDNIRNSVIDEVIVCDTIPLSAEIKALKNVRTLTLSGMLAEAIRRISNEESISAMFEH.

Residues 37 to 39 (DGE) and 96 to 97 (RQ) each bind ATP. Mg(2+) contacts are provided by His131 and Asp170. Lys194 is a catalytic residue. D-ribose 5-phosphate is bound by residues Arg196, Asp220, and 224–228 (DTGGT).

The protein belongs to the ribose-phosphate pyrophosphokinase family. Class I subfamily. Homohexamer. Mg(2+) serves as cofactor.

It is found in the cytoplasm. The catalysed reaction is D-ribose 5-phosphate + ATP = 5-phospho-alpha-D-ribose 1-diphosphate + AMP + H(+). It functions in the pathway metabolic intermediate biosynthesis; 5-phospho-alpha-D-ribose 1-diphosphate biosynthesis; 5-phospho-alpha-D-ribose 1-diphosphate from D-ribose 5-phosphate (route I): step 1/1. Its function is as follows. Involved in the biosynthesis of the central metabolite phospho-alpha-D-ribosyl-1-pyrophosphate (PRPP) via the transfer of pyrophosphoryl group from ATP to 1-hydroxyl of ribose-5-phosphate (Rib-5-P). The polypeptide is Ribose-phosphate pyrophosphokinase (Yersinia pestis).